The following is a 414-amino-acid chain: Esterase FrsA (414 aa).

Belongs to the FrsA family.

It catalyses the reaction a carboxylic ester + H2O = an alcohol + a carboxylate + H(+). Catalyzes the hydrolysis of esters. The chain is Esterase FrsA from Escherichia coli O45:K1 (strain S88 / ExPEC).